A 156-amino-acid chain; its full sequence is Small ribosomal subunit protein uS7 (156 aa).

The protein belongs to the universal ribosomal protein uS7 family. As to quaternary structure, part of the 30S ribosomal subunit. Contacts proteins S9 and S11.

Its function is as follows. One of the primary rRNA binding proteins, it binds directly to 16S rRNA where it nucleates assembly of the head domain of the 30S subunit. Is located at the subunit interface close to the decoding center, probably blocks exit of the E-site tRNA. This chain is Small ribosomal subunit protein uS7, found in Salmonella agona (strain SL483).